The primary structure comprises 1058 residues: Bromodomain-containing protein 1 (1058 aa).

Basic residues predominate over residues 1-12 (MRRKGRCHRGSA). A disordered region spans residues 1–26 (MRRKGRCHRGSAARHPSSPCSVKHSP). The interaction with KAT7/HBO1 and histones stretch occupies residues 31–80 (LTYAQAQRMVEIEIEGRLHRISIFDPLEIILEDDLTAQEMSECNSNKENS). Residues 92 to 116 (HKNNRVKKKNEALPSAHGTPASASA) are disordered. Serine 128 carries the post-translational modification Phosphoserine. Residues 214-264 (DAVCCICMDGECQNSNVILFCDMCNLAVHQECYGVPYIPEGQWLCRHCLQS) form a PHD-type 1 zinc finger. The C2HC pre-PHD-type zinc-finger motif lies at 268–301 (PADCVLCPNKGGAFKKTDDDRWGHVVCALWIPEV). The PHD-type 2 zinc finger occupies 325-389 (LTCYLCKQKG…RKTAYCDVHT (65 aa)). An N6-acetyllysine mark is found at lysine 368, lysine 516, and lysine 519. Residues lysine 554 and lysine 594 each participate in a glycyl lysine isopeptide (Lys-Gly) (interchain with G-Cter in SUMO2) cross-link. Residues 562 to 666 (LRLTPLTVLL…DQGGVVLRQA (105 aa)) form the Bromo domain. Disordered stretches follow at residues 755–776 (LSQQHSQPLPTGPGLEGFEEDG) and 791–868 (LETL…DSSF). Serine 803 carries the phosphoserine modification. A compositionally biased stretch (low complexity) spans 852 to 867 (SESSISSSNSPLCDSS). At lysine 903 the chain carries N6-acetyllysine. The residue at position 906 (arginine 906) is a Phosphoserine. The 84-residue stretch at 929–1012 (PLKVVWAKCS…KSKMVPLGID (84 aa)) folds into the PWWP domain. 2 positions are modified to phosphoserine: serine 1052 and serine 1055.

In terms of assembly, component of some HBO1 complex composed of KAT7/HBO1, MEAF6, ING4 and BRD1/BRPF2. Component of the MOZ/MORF complex composed at least of ING5, KAT6A, KAT6B, MEAF6 and one of BRPF1, BRD1/BRPF2 and BRPF3. Interacts (via PHD-type zinc finger domain) with unmodified histone H3. Interacts (via PWWP domain) with dimethylated and trimethylated 'Lys-79' on histone H3. Highly expressed in testis.

The protein localises to the nucleus. Its subcellular location is the chromosome. In terms of biological role, scaffold subunit of various histone acetyltransferase (HAT) complexes, such as the MOZ/MORF and HBO1 complexes, that acts as a regulator of hematopoiesis. Plays a key role in HBO1 complex by directing KAT7/HBO1 specificity towards histone H3 'Lys-14' acetylation (H3K14ac), thereby promoting erythroid differentiation. The protein is Bromodomain-containing protein 1 of Homo sapiens (Human).